The following is a 55-amino-acid chain: Large ribosomal subunit protein bL32 (55 aa).

The segment at 1 to 28 (MAVQQNKPTRSKRGMRRSHDALTTATLS) is disordered.

Belongs to the bacterial ribosomal protein bL32 family.

This Serratia proteamaculans (strain 568) protein is Large ribosomal subunit protein bL32.